The sequence spans 141 residues: Ribonuclease VapC38 (141 aa).

Asp-5 and Asp-102 together coordinate Mg(2+).

This sequence belongs to the PINc/VapC protein family. The cofactor is Mg(2+).

It is found in the secreted. Toxic component of a type II toxin-antitoxin (TA) system. An RNase. Its cognate antitoxin is VapB38. The sequence is that of Ribonuclease VapC38 from Mycobacterium tuberculosis (strain ATCC 25618 / H37Rv).